The sequence spans 359 residues: Guanine nucleotide-binding protein G(q) subunit alpha (359 aa).

S-palmitoyl cysteine attachment occurs at residues cysteine 9 and cysteine 10. The 322-residue stretch at 38–359 (RELKLLLLGT…QLNLKEYNLV (322 aa)) folds into the G-alpha domain. The interval 41–54 (KLLLLGTGESGKST) is G1 motif. GTP-binding residues include serine 50, glycine 51, lysine 52, serine 53, threonine 54, serine 156, leucine 180, arginine 181, and arginine 183. Serine 53 contributes to the Mg(2+) binding site. The interval 178 to 186 (DVLRVRVPT) is G2 motif. Threonine 186 contributes to the Mg(2+) binding site. The interval 201–210 (FRMVDVGGQR) is G3 motif. At glutamine 209 the chain carries 5-glutamyl histamine. Residues 270 to 277 (ILFLNKKD) form a G4 motif region. GTP is bound by residues asparagine 274, lysine 275, aspartate 277, and alanine 331. A G5 motif region spans residues 329-334 (TCATDT).

The protein belongs to the G-alpha family. G(q) subfamily. As to quaternary structure, g proteins are composed of 3 units; alpha, beta and gamma. The alpha chain contains the guanine nucleotide binding site. Interacts (GDP-bound form) with RIC8A (via C-terminus); promoting GNAQ folding and association with the plasma membrane. Binds NHERF1. Forms a complex with PECAM1 and BDKRB2. Interacts with GAS2L2. Palmitoylated by ZDHHC3 and ZDHHC7. Palmitoylation occurs in the Golgi and participates in the localization of GNAQ to the plasma membrane. Post-translationally, histaminylated at Gln-209 residues by TGM2.

The protein localises to the cell membrane. Its subcellular location is the golgi apparatus. It is found in the nucleus. The protein resides in the nucleus membrane. It carries out the reaction GTP + H2O = GDP + phosphate + H(+). Functionally, guanine nucleotide-binding proteins (G proteins) function as transducers downstream of G protein-coupled receptors (GPCRs) in numerous signaling cascades. The alpha chain contains the guanine nucleotide binding site and alternates between an active, GTP-bound state and an inactive, GDP-bound state. Signaling by an activated GPCR promotes GDP release and GTP binding. The alpha subunit has a low GTPase activity that converts bound GTP to GDP, thereby terminating the signal. Both GDP release and GTP hydrolysis are modulated by numerous regulatory proteins. Signaling is mediated via phospholipase C-beta-dependent inositol lipid hydrolysis for signal propagation: activates phospholipase C-beta: following GPCR activation, GNAQ activates PLC-beta (PLCB1, PLCB2, PLCB3 or PLCB4), leading to production of diacylglycerol (DAG) and inositol 1,4,5-trisphosphate (IP3). Required for platelet activation. Regulates B-cell selection and survival and is required to prevent B-cell-dependent autoimmunity. Regulates chemotaxis of BM-derived neutrophils and dendritic cells (in vitro). Transduces FFAR4 signaling in response to long-chain fatty acids (LCFAs). Together with GNA11, required for heart development. This is Guanine nucleotide-binding protein G(q) subunit alpha (GNAQ) from Canis lupus familiaris (Dog).